We begin with the raw amino-acid sequence, 664 residues long: MDSSHQSNYKLSKTEKKFLRKQIKARHTLLRHEGIETVSYATQSLVVANGGLGNGVSRNQLLPVLEKCGLVDALLMPPNKPYSFARYKTTEESKRAYVTLNGKEVVDDLGQKIILYLNFVEKAQWKELRPQALPPGLMVVEEIISSEEEKMLLESVDWTEDTDNQNSQKSLKHRRVKHFGYEFHYENNNVDKDKPLPGGLPDICDSFLEKWLREGYIKHKPDQMTINQYEPGQGIPAHIDTHSAFEDEIVSLSLGSEIVMDFKHPDGTAVPVMLPRRSLLVMTGESRYLWTHGITCRKFDTVQASENHKSGIITSDVGDLTLSKRGLRTSFTFRKVRQTPCNCSYPLVCDSQRKETPPSFPESDEEASRLEQEYVHQVYEEIAGHFSSTRHTPWPHIVEFLKALPSGSIVADIGCGNGKYLGVNKELYMVGCDRSQNLVDICRERQFQAFVCDALAVPVRSGSCDACISIAVIHHFATAERRVAALQEIVRLLRPGGKALIYVWAMEQEYNKQKSKYLKGNRNSQGKKEEMNSDTSVQRSLVEQMPDMGSRDSASSVPRINDSQEGGCNSRQVSNSKLPIHVNRTSFYSQDMLVPWHLKGNPDKGKPVEPFGPIGSQDPSPVFHRYYHVFREGELEALCRTVSDVRILQSYYDQGNWCVILQKA.

The 78-residue stretch at Gln-43–Val-120 folds into the RRM domain. Residues Lys-220–Arg-337 form the Fe2OG dioxygenase domain. Asn-227–Tyr-229 is a 2-oxoglutarate binding site. Fe cation is bound by residues His-238 and Asp-240. His-242 lines the Zn(2+) pocket. His-292 contacts Fe cation. 2-oxoglutarate is bound by residues Arg-328 and Arg-334. The Zn(2+) site is built by Cys-341, Cys-343, and Cys-349. The interval Ala-411–Ala-664 is methyltransferase domain. The interval Lys-516–Asn-575 is disordered. The span at Asp-552–Asn-575 shows a compositional bias: polar residues.

The protein belongs to the alkB family. Interacts with TRMT112. Fe(2+) is required as a cofactor.

The protein resides in the cytoplasm. It is found in the nucleus. It catalyses the reaction 5-(carboxymethyl)uridine(34) in tRNA + S-adenosyl-L-methionine = 5-(2-methoxy-2-oxoethyl)uridine(34) in tRNA + S-adenosyl-L-homocysteine. Functionally, catalyzes the methylation of 5-carboxymethyl uridine to 5-methylcarboxymethyl uridine at the wobble position of the anticodon loop in tRNA via its methyltransferase domain. Catalyzes the last step in the formation of 5-methylcarboxymethyl uridine at the wobble position of the anticodon loop in target tRNA. Has a preference for tRNA(Arg) and tRNA(Glu), and does not bind tRNA(Lys). Binds tRNA and catalyzes the iron and alpha-ketoglutarate dependent hydroxylation of 5-methylcarboxymethyl uridine at the wobble position of the anticodon loop in tRNA via its dioxygenase domain, giving rise to 5-(S)-methoxycarbonylhydroxymethyluridine; has a preference for tRNA(Gly). Required for normal survival after DNA damage. May inhibit apoptosis and promote cell survival and angiogenesis. The protein is tRNA (carboxymethyluridine(34)-5-O)-methyltransferase ALKBH8 (ALKBH8) of Macaca fascicularis (Crab-eating macaque).